Consider the following 109-residue polypeptide: Small ribosomal subunit protein uS17 (109 aa).

This sequence belongs to the universal ribosomal protein uS17 family. Part of the 30S ribosomal subunit.

Its function is as follows. One of the primary rRNA binding proteins, it binds specifically to the 5'-end of 16S ribosomal RNA. The sequence is that of Small ribosomal subunit protein uS17 from Methanococcoides burtonii (strain DSM 6242 / NBRC 107633 / OCM 468 / ACE-M).